The chain runs to 105 residues: MNPSEMQRKAPPRRRRHRNRAPSSHKMNKMMMSEEQMKLPSTNKAEPLTWAQLNKLTQLATKCLENTKMTQTPESMLLAALMIVSTVSAGVPNSSEETVTIENGP.

Residues 1–41 (MNPSEMQRKAPPRRRRHRNRAPSSHKMNKMMMSEEQMKLPS) form a disordered region. Positions 10–20 (APPRRRRHRNR) are enriched in basic residues. The Nuclear localization signal motif lies at 13–20 (RRRRHRNR). Positions 50-59 (WAQLNKLTQL) match the Nuclear export signal motif.

In terms of assembly, forms homodimers, homotrimers, and homotetramers via a C-terminal domain. Associates with XPO1 and with ZNF145.

It is found in the cytoplasm. It localises to the nucleus. Its subcellular location is the nucleolus. Retroviral replication requires the nuclear export and translation of unspliced, singly-spliced and multiply-spliced derivatives of the initial genomic transcript. Rec interacts with a highly structured RNA element (RcRE) present in the viral 3'LTR and recruits the cellular nuclear export machinery. This permits export to the cytoplasm of unspliced genomic or incompletely spliced subgenomic viral transcripts. This Homo sapiens (Human) protein is Endogenous retrovirus group K member 16 Rec protein (ERVK-16).